The chain runs to 159 residues: Phosphopantetheine adenylyltransferase (159 aa).

Ser9 provides a ligand contact to substrate. ATP is bound by residues 9-10 (SF) and His17. Substrate contacts are provided by Lys41, Leu74, and Lys88. Residues 89–91 (GLR), Glu99, and 123–129 (YLHLSST) each bind ATP.

This sequence belongs to the bacterial CoaD family. In terms of assembly, homohexamer. Requires Mg(2+) as cofactor.

Its subcellular location is the cytoplasm. The enzyme catalyses (R)-4'-phosphopantetheine + ATP + H(+) = 3'-dephospho-CoA + diphosphate. It participates in cofactor biosynthesis; coenzyme A biosynthesis; CoA from (R)-pantothenate: step 4/5. In terms of biological role, reversibly transfers an adenylyl group from ATP to 4'-phosphopantetheine, yielding dephospho-CoA (dPCoA) and pyrophosphate. The sequence is that of Phosphopantetheine adenylyltransferase from Arthrobacter sp. (strain FB24).